The primary structure comprises 246 residues: UDP-N-acetyl-D-mannosaminuronic acid transferase (246 aa).

The protein belongs to the glycosyltransferase 26 family.

The catalysed reaction is UDP-N-acetyl-alpha-D-mannosaminouronate + N-acetyl-alpha-D-glucosaminyl-di-trans,octa-cis-undecaprenyl diphosphate = beta-D-ManNAcA-(1-&gt;4)-alpha-D-GlcNAc-di-trans,octa-cis-undecaprenyl diphosphate + UDP + H(+). It functions in the pathway bacterial outer membrane biogenesis; enterobacterial common antigen biosynthesis. Catalyzes the synthesis of Und-PP-GlcNAc-ManNAcA (Lipid II), the second lipid-linked intermediate involved in enterobacterial common antigen (ECA) synthesis. This chain is UDP-N-acetyl-D-mannosaminuronic acid transferase, found in Klebsiella pneumoniae (strain 342).